Here is a 394-residue protein sequence, read N- to C-terminus: Proliferation-associated protein 2G4 (394 aa).

An N-acetylserine modification is found at Ser2. Residue Ser2 is modified to Phosphoserine. Residues 2–48 form a necessary for nucleolar localization region; that stretch reads SGEDEQQEQTIAEDLVVTKYKMGGDIANRVLRSLVEASSSGVSVLSL. The RNA-binding stretch occupies residues 46 to 54; that stretch reads LSLCEKGDA. Lys298 is covalently cross-linked (Glycyl lysine isopeptide (Lys-Gly) (interchain with G-Cter in SUMO2)). Residues 301-394 are necessary for nucleolar localization; the sequence is LLQPFNVLYE…ETLEENGAGD (94 aa). Position 335 is a phosphoserine (Ser335). Positions 358 to 394 are disordered; sequence LQSSASRKTQKKKKKKASKTAENATSGETLEENGAGD. A Phosphoserine; by PKC/PRKCD modification is found at Ser361. The tract at residues 361–375 is interaction with RNA; that stretch reads SASRKTQKKKKKKAS. Positions 365–375 are enriched in basic residues; the sequence is KTQKKKKKKAS. 2 positions are modified to phosphothreonine: Thr366 and Thr386.

The protein belongs to the peptidase M24 family. In terms of assembly, isoform 2 interacts with the cytoplasmic domain of non-phosphorylated ERBB3; the interaction requires PKC activity. Interacts with AR. Treatment with HRG leads to dissociation from ERBB3 and increases association with AR. Interacts with nucleolin/NCL. Component of a ribonucleoprotein complex containing at least PA2G4, NCL, TOP1, PABPC2, RPLP0, acetylated histone H1 (HIST1H1A or H1F1), histone H1 2/4, RPL4, RPL8, RPL15, RPL18, RPL18A, RPL21, RPL11, RPL12, RPL28, RPL27, RPLP2 and RPL24. Interacts with HDAC2. Interacts with RB1; the interaction is enhanced upon PA2G4 dephosphorylation. Isoform 1 and isoform 2 interact with RNF20. Isoform 2 interacts with HUWE1. Interacts with AKT1. Interacts with DNAJC21. Post-translationally, phosphorylated on serine and threonine residues. Phosphorylation is enhanced by HRG treatment. Basal phosphorylation is PKC-dependent and HRG-induced phosphorylation is predominantly PKC-independent. Phosphorylation at Ser-361 by PKC/PRKCD regulates its nucleolar localization. In terms of processing, isoform 2 is polyubiquitinated, leading to proteasomal degradation and phosphorylation by PKC/PRKCD enhances polyubiquitination.

It is found in the cytoplasm. It localises to the nucleus. The protein localises to the nucleolus. May play a role in a ERBB3-regulated signal transduction pathway. Seems be involved in growth regulation. Acts a corepressor of the androgen receptor (AR) and is regulated by the ERBB3 ligand neuregulin-1/heregulin (HRG). Inhibits transcription of some E2F1-regulated promoters, probably by recruiting histone acetylase (HAT) activity. Binds RNA. Associates with 28S, 18S and 5.8S mature rRNAs, several rRNA precursors and probably U3 small nucleolar RNA. May be involved in regulation of intermediate and late steps of rRNA processing. May be involved in ribosome assembly. Mediates cap-independent translation of specific viral IRESs (internal ribosomal entry site). Together with PTBP1 is required for the translation initiation on the foot-and-mouth disease virus (FMDV) IRES. Regulates cell proliferation, differentiation, and survival. Isoform 1 suppresses apoptosis whereas isoform 2 promotes cell differentiation. The chain is Proliferation-associated protein 2G4 (Pa2g4) from Rattus norvegicus (Rat).